Reading from the N-terminus, the 2110-residue chain is Tenascin (2110 aa).

The first 22 residues, 1-22 (MGAVTWLLPGIFLALFALTPEG), serve as a signal peptide directing secretion. Asn-38 carries an N-linked (GlcNAc...) asparagine glycan. Phosphoserine occurs at positions 65, 70, and 72. Positions 69-91 (ESASGEKDLTPTPESSGSFQEHT) are disordered. Ser-72 carries O-linked (Xyl...) (chondroitin sulfate) serine glycosylation. Residues 80–89 (TPESSGSFQE) are compositionally biased toward polar residues. The stretch at 118-142 (DVKELLSRLEELELLVSSLREQCTM) forms a coiled coil. N-linked (GlcNAc...) asparagine glycosylation is found at Asn-166 and Asn-184. In terms of domain architecture, EGF-like 1; incomplete spans 174–185 (CVCEPGWKGPNC). 14 consecutive EGF-like domains span residues 186–216 (SEPD…GEDC), 217–247 (SQLA…GPDC), 248–279 (GLEV…GEDC), 280–310 (NEPL…GEDC), 311–341 (SELI…GEDC), 342–372 (GELT…GADC), 373–403 (SEKR…GADC), 404–434 (GDLQ…GEDC), 435–465 (SQRR…GFDC), 466–496 (SEMS…GEDC), 497–527 (RDRR…GPDC), 528–558 (AELS…GKDC), 559–589 (KEQR…GLDC), and 590–621 (GQRS…IDCS). Disulfide bonds link Cys-190–Cys-200, Cys-194–Cys-205, Cys-207–Cys-216, Cys-221–Cys-231, Cys-225–Cys-236, Cys-238–Cys-247, Cys-252–Cys-263, Cys-256–Cys-268, Cys-270–Cys-279, Cys-284–Cys-294, Cys-288–Cys-299, Cys-301–Cys-310, Cys-315–Cys-325, Cys-319–Cys-330, Cys-332–Cys-341, Cys-346–Cys-356, Cys-350–Cys-361, Cys-363–Cys-372, Cys-377–Cys-387, Cys-381–Cys-392, Cys-394–Cys-403, Cys-408–Cys-418, Cys-412–Cys-423, Cys-425–Cys-434, Cys-439–Cys-449, Cys-443–Cys-454, Cys-456–Cys-465, Cys-470–Cys-480, Cys-474–Cys-485, Cys-487–Cys-496, Cys-501–Cys-511, Cys-505–Cys-516, Cys-518–Cys-527, Cys-532–Cys-542, Cys-536–Cys-547, Cys-549–Cys-558, Cys-563–Cys-573, Cys-567–Cys-578, Cys-580–Cys-589, Cys-594–Cys-604, Cys-598–Cys-609, and Cys-611–Cys-620. Asn-327 carries an N-linked (GlcNAc...) asparagine glycan. Fibronectin type-III domains lie at 625-715 (PPKD…LPAP), 716-804 (EGLK…TRLD), 805-894 (APSH…TGLD), 895-988 (APRN…IDAP), 989-1077 (KDLR…VPSL), 1078-1165 (ENLT…TGTT), 1167-1259 (NLGE…LPQL), 1260-1348 (GGLS…AREP), 1349-1440 (EIGN…ALPL), 1442-1530 (ENLT…EAEP), 1531-1620 (EVDN…TAMG), 1621-1710 (SPKE…ALDG), 1711-1797 (PSGL…TDLD), and 1798-1886 (SPRE…IGLL). Asn-788 carries an N-linked (GlcNAc...) asparagine glycan. Thr-905 is subject to Phosphothreonine. 12 N-linked (GlcNAc...) asparagine glycosylation sites follow: Asn-1018, Asn-1079, Asn-1093, Asn-1119, Asn-1184, Asn-1210, Asn-1275, Asn-1301, Asn-1354, Asn-1364, Asn-1394, and Asn-1443. Residue Asn-1718 is glycosylated (N-linked (GlcNAc...) asparagine). The 216-residue stretch at 1884-2099 (GLLYPFPRDC…FAEMKLRPSN (216 aa)) folds into the Fibrinogen C-terminal domain. N-linked (GlcNAc...) asparagine glycans are attached at residues Asn-1969 and Asn-2071.

The protein belongs to the tenascin family. Homohexamer; disulfide-linked. A homotrimer may be formed in the triple coiled-coil region and may be stabilized by disulfide rings at both ends. Two of such half-hexabrachions may be disulfide linked within the central globule. Interacts with CSPG4. Interacts (via the 3rd fibronectin type-III domain) with integrin ITGA9:ITGB1. In terms of processing, N-glycosylated. In terms of tissue distribution, expressed in the corneal limbus, the periosteum and the rib molecular layer of the cerebellum, the matrix of kidney tubules, blood vessels, stomach and intestine (at protein level). As to expression, weakly expressed in the brain. Highly expressed in the thymus and moderately expressed in the brain.

It is found in the secreted. It localises to the extracellular space. Its subcellular location is the extracellular matrix. Extracellular matrix protein implicated in guidance of migrating neurons as well as axons during development, synaptic plasticity as well as neuronal regeneration. Promotes neurite outgrowth when provided to neurons in culture. May play a role in supporting the growth of epithelial tumors. Ligand for integrins ITGA8:ITGB1, ITGA9:ITGB1, ITGAV:ITGB3 and ITGAV:ITGB6. In tumors, stimulates angiogenesis by elongation, migration and sprouting of endothelial cells. The chain is Tenascin from Mus musculus (Mouse).